Reading from the N-terminus, the 348-residue chain is Sulfate/thiosulfate import ATP-binding protein CysA (348 aa).

Positions isoleucine 3–valine 237 constitute an ABC transporter domain. Glycine 35 to threonine 42 contacts ATP.

This sequence belongs to the ABC transporter superfamily. Sulfate/tungstate importer (TC 3.A.1.6) family. As to quaternary structure, the complex is composed of two ATP-binding proteins (CysA), two transmembrane proteins (CysT and CysW) and a solute-binding protein (CysP).

The protein localises to the cell inner membrane. It catalyses the reaction sulfate(out) + ATP + H2O = sulfate(in) + ADP + phosphate + H(+). It carries out the reaction thiosulfate(out) + ATP + H2O = thiosulfate(in) + ADP + phosphate + H(+). Its function is as follows. Part of the ABC transporter complex CysAWTP involved in sulfate/thiosulfate import. Responsible for energy coupling to the transport system. This chain is Sulfate/thiosulfate import ATP-binding protein CysA, found in Xylella fastidiosa (strain 9a5c).